Consider the following 1453-residue polypeptide: Clustered mitochondria protein homolog (1453 aa).

A compositionally biased stretch (polar residues) spans 78–101 (LSENGQENSPHNSDSGHETSSPDS). The segment at 78 to 110 (LSENGQENSPHNSDSGHETSSPDSPLTPIEEGA) is disordered. The Clu domain occupies 439–690 (EDGIRAEDCT…RTFPPDVNYL (252 aa)). Residues 979–1015 (PLTPSNEEVSMPINSVKKSRSSKRRKQISSGGKENDD) form a disordered region. Residues 995–1005 (KKSRSSKRRKQ) show a composition bias toward basic residues. 2 TPR repeats span residues 1235–1268 (AEIDGNIGVILYAVQEFDDALKFLQNALKLHQIY) and 1277–1310 (ALIYHLLARTYSCRGDFRTALQMEKETFTIYSKT).

Belongs to the CLU family.

The protein resides in the cytoplasm. Functionally, mRNA-binding protein involved in proper cytoplasmic distribution of mitochondria. This is Clustered mitochondria protein homolog from Brugia malayi (Filarial nematode worm).